The chain runs to 30 residues: Glucagon-like peptide (30 aa).

Arginine 30 carries the arginine amide modification.

Belongs to the glucagon family.

The protein resides in the secreted. This chain is Glucagon-like peptide, found in Anguilla anguilla (European freshwater eel).